We begin with the raw amino-acid sequence, 466 residues long: Putative chitinase 2 (466 aa).

The N-terminal stretch at 1–17 (MYLTIWLVPLLAVGTWG) is a signal peptide. The GH18 domain maps to 20–380 (FNRFCHYNSW…MAVIHGLNAY (361 aa)). Residues Cys-24 and Cys-49 are joined by a disulfide bond. Residue Glu-141 is the Proton donor of the active site. Positions 395–447 (YNKKILRARVSLRNYRRRNQQGKVAEMEQRIRNLEQELQQSMGNMAYERQQAQ) form a coiled coil.

Belongs to the glycosyl hydrolase 18 family. As to expression, prismatic layer of shell (at protein level). Expressed primarily in the mantle with highest level in the mantle edge and lower level in the mantle pallium.

It is found in the secreted. The catalysed reaction is Random endo-hydrolysis of N-acetyl-beta-D-glucosaminide (1-&gt;4)-beta-linkages in chitin and chitodextrins.. This Margaritifera margaritifera (Freshwater pearl mussel) protein is Putative chitinase 2.